The following is a 325-amino-acid chain: Lactonase drp35 (325 aa).

Residues E46, T108, G110, D128, T131, Y133, D136, N183, D234, and S235 each contribute to the Ca(2+) site. Residue D234 is the Proton donor of the active site.

Belongs to the SMP-30/CGR1 family. Ca(2+) is required as a cofactor.

The protein localises to the cytoplasm. Its function is as follows. Exhibits lactonase activity. Acts in cells with perturbed membrane integrity and is possibly related to the membrane homeostasis. This Staphylococcus epidermidis (strain ATCC 35984 / DSM 28319 / BCRC 17069 / CCUG 31568 / BM 3577 / RP62A) protein is Lactonase drp35 (drp35).